Here is a 160-residue protein sequence, read N- to C-terminus: Protein-export protein SecB (160 aa).

The protein belongs to the SecB family. As to quaternary structure, homotetramer, a dimer of dimers. One homotetramer interacts with 1 SecA dimer.

The protein localises to the cytoplasm. Functionally, one of the proteins required for the normal export of preproteins out of the cell cytoplasm. It is a molecular chaperone that binds to a subset of precursor proteins, maintaining them in a translocation-competent state. It also specifically binds to its receptor SecA. This Rhizobium etli (strain ATCC 51251 / DSM 11541 / JCM 21823 / NBRC 15573 / CFN 42) protein is Protein-export protein SecB.